A 637-amino-acid chain; its full sequence is Sodium-dependent proline transporter (637 aa).

Residues 1–45 (MKKLQEAHLRKPVTPDLLMTPSDQGDVDLDVDFAADRGNWTGKLD) are Cytoplasmic-facing. The residue at position 20 (Thr-20) is a Phosphothreonine. At Ser-22 the chain carries Phosphoserine. 3 consecutive transmembrane segments (helical) span residues 46 to 66 (FLLS…FPYR), 74 to 93 (AFLV…LFFL), and 117 to 137 (GAGA…NMII). The Extracellular segment spans residues 138-214 (AYVLFYLFAS…QGIGRPGEIR (77 aa)). An N-linked (GlcNAc...) asparagine glycan is attached at Asn-182. A run of 9 helical transmembrane segments spans residues 215-233 (WNLC…LCIL), 242-259 (VVYF…MLLV), 295-312 (IFYS…FASY), 324-345 (FIVT…FSVL), 378-397 (LPLS…TLGL), 425-443 (VFSG…ILTT), 459-479 (SFGL…VYGI), 500-519 (ACWL…YSIV), and 538-556 (LGIL…GMLV). Over 557–637 (AVLREEGSLW…IAEEEEESMM (81 aa)) the chain is Cytoplasmic. A phosphoserine mark is found at Ser-573 and Ser-582. Thr-588 carries the post-translational modification Phosphothreonine. At Tyr-591 the chain carries Phosphotyrosine. 2 positions are modified to phosphoserine: Ser-598 and Ser-600.

Belongs to the sodium:neurotransmitter symporter (SNF) (TC 2.A.22) family. SLC6A7 subfamily. As to expression, expressed in subpopulations of putative glutamatergic pathways of rat brain.

The protein resides in the synaptic cell membrane. The catalysed reaction is L-proline(out) + chloride(out) + 2 Na(+)(out) = L-proline(in) + chloride(in) + 2 Na(+)(in). The enzyme catalyses L-pipecolate(out) + chloride(out) + 2 Na(+)(out) = L-pipecolate(in) + chloride(in) + 2 Na(+)(in). Functionally, brain specific sodium (and chloride)-dependent proline transporter. Terminates the action of proline by its high affinity sodium-dependent reuptake into presynaptic terminals. The protein is Sodium-dependent proline transporter (Slc6a7) of Rattus norvegicus (Rat).